Reading from the N-terminus, the 179-residue chain is MRKNFALIGPRGVGKSKISRKLSKITGMPVVSTDMIAVYEMGGISIPEFIQENEGDWKTFRDLEFQILVKLKTSRGIILDCGGGILFDLDTKGKEVPSSRKIDLLKSIAVVFGLSKPTEILVEKIQNDPTRPPLSAINSYRSIVENRLPHYRSVSDYYLEIDDLKVEEVCSRILHKIEY.

Position 12–17 (12–17 (GVGKSK)) interacts with ATP. Ser-16 lines the Mg(2+) pocket. Positions 34, 61, and 83 each coordinate substrate. Arg-131 lines the ATP pocket. Arg-147 is a substrate binding site.

It belongs to the shikimate kinase family. Monomer. The cofactor is Mg(2+).

The protein localises to the cytoplasm. It carries out the reaction shikimate + ATP = 3-phosphoshikimate + ADP + H(+). It functions in the pathway metabolic intermediate biosynthesis; chorismate biosynthesis; chorismate from D-erythrose 4-phosphate and phosphoenolpyruvate: step 5/7. In terms of biological role, catalyzes the specific phosphorylation of the 3-hydroxyl group of shikimic acid using ATP as a cosubstrate. The polypeptide is Shikimate kinase (Leptospira borgpetersenii serovar Hardjo-bovis (strain JB197)).